A 286-amino-acid polypeptide reads, in one-letter code: Ribonuclease Z (286 aa).

Residues His-61, His-63, Asp-65, His-66, His-153, Asp-176, and His-240 each coordinate Zn(2+). Asp-65 functions as the Proton acceptor in the catalytic mechanism.

Belongs to the RNase Z family. Homodimer. It depends on Zn(2+) as a cofactor.

The catalysed reaction is Endonucleolytic cleavage of RNA, removing extra 3' nucleotides from tRNA precursor, generating 3' termini of tRNAs. A 3'-hydroxy group is left at the tRNA terminus and a 5'-phosphoryl group is left at the trailer molecule.. Functionally, zinc phosphodiesterase, which displays some tRNA 3'-processing endonuclease activity. Probably involved in tRNA maturation, by removing a 3'-trailer from precursor tRNA. The protein is Ribonuclease Z of Mycolicibacterium gilvum (strain PYR-GCK) (Mycobacterium gilvum (strain PYR-GCK)).